Consider the following 369-residue polypeptide: Galactose-1-phosphate uridylyltransferase (369 aa).

Zn(2+)-binding residues include C54 and C57. UDP-alpha-D-glucose contacts are provided by residues A63 and 79–80; that span reads ND. H127 lines the Zn(2+) pocket. N172 lines the UDP-alpha-D-glucose pocket. H183 is a Zn(2+) binding site. H185 (tele-UMP-histidine intermediate) is an active-site residue. Position 187 (Q187) interacts with UDP-alpha-D-glucose. Fe cation-binding residues include E201, H300, H317, and H319. UDP-alpha-D-glucose contacts are provided by residues 332 to 335 and 337 to 338; these read KFCV and FE.

Belongs to the galactose-1-phosphate uridylyltransferase type 1 family. Homodimer. Zn(2+) serves as cofactor.

It catalyses the reaction alpha-D-galactose 1-phosphate + UDP-alpha-D-glucose = alpha-D-glucose 1-phosphate + UDP-alpha-D-galactose. It participates in carbohydrate metabolism; galactose metabolism. The chain is Galactose-1-phosphate uridylyltransferase (gal7) from Schizosaccharomyces pombe (strain 972 / ATCC 24843) (Fission yeast).